The following is a 185-amino-acid chain: Ribosome-recycling factor (185 aa).

This sequence belongs to the RRF family.

The protein resides in the cytoplasm. Responsible for the release of ribosomes from messenger RNA at the termination of protein biosynthesis. May increase the efficiency of translation by recycling ribosomes from one round of translation to another. This is Ribosome-recycling factor from Nitrosomonas europaea (strain ATCC 19718 / CIP 103999 / KCTC 2705 / NBRC 14298).